The chain runs to 371 residues: Dual-specificity RNA methyltransferase RlmN (371 aa).

E114 functions as the Proton acceptor in the catalytic mechanism. Residues 120–352 (EEDHFTLCVS…VMTRQSKGAD (233 aa)) enclose the Radical SAM core domain. A disulfide bond links C127 and C357. [4Fe-4S] cluster contacts are provided by C134, C138, and C141. S-adenosyl-L-methionine-binding positions include 183–184 (GE), S216, 238–240 (SLN), and N314. The S-methylcysteine intermediate role is filled by C357.

This sequence belongs to the radical SAM superfamily. RlmN family. The cofactor is [4Fe-4S] cluster.

It is found in the cytoplasm. It carries out the reaction adenosine(2503) in 23S rRNA + 2 reduced [2Fe-2S]-[ferredoxin] + 2 S-adenosyl-L-methionine = 2-methyladenosine(2503) in 23S rRNA + 5'-deoxyadenosine + L-methionine + 2 oxidized [2Fe-2S]-[ferredoxin] + S-adenosyl-L-homocysteine. The enzyme catalyses adenosine(37) in tRNA + 2 reduced [2Fe-2S]-[ferredoxin] + 2 S-adenosyl-L-methionine = 2-methyladenosine(37) in tRNA + 5'-deoxyadenosine + L-methionine + 2 oxidized [2Fe-2S]-[ferredoxin] + S-adenosyl-L-homocysteine. In terms of biological role, specifically methylates position 2 of adenine 2503 in 23S rRNA and position 2 of adenine 37 in tRNAs. m2A2503 modification seems to play a crucial role in the proofreading step occurring at the peptidyl transferase center and thus would serve to optimize ribosomal fidelity. This Desulfosudis oleivorans (strain DSM 6200 / JCM 39069 / Hxd3) (Desulfococcus oleovorans) protein is Dual-specificity RNA methyltransferase RlmN.